Reading from the N-terminus, the 250-residue chain is Vitamin B12 import ATP-binding protein BtuD (250 aa).

The region spanning leucine 3–alanine 233 is the ABC transporter domain. Glycine 29–serine 36 contributes to the ATP binding site.

The protein belongs to the ABC transporter superfamily. Vitamin B12 importer (TC 3.A.1.13.1) family. As to quaternary structure, the complex is composed of two ATP-binding proteins (BtuD), two transmembrane proteins (BtuC) and a solute-binding protein (BtuF).

The protein resides in the cell inner membrane. It catalyses the reaction an R-cob(III)alamin(out) + ATP + H2O = an R-cob(III)alamin(in) + ADP + phosphate + H(+). Its function is as follows. Part of the ABC transporter complex BtuCDF involved in vitamin B12 import. Responsible for energy coupling to the transport system. This chain is Vitamin B12 import ATP-binding protein BtuD, found in Pectobacterium atrosepticum (strain SCRI 1043 / ATCC BAA-672) (Erwinia carotovora subsp. atroseptica).